The sequence spans 180 residues: Aspartate 1-decarboxylase (180 aa).

The active-site Schiff-base intermediate with substrate; via pyruvic acid is Ser24. Ser24 is modified (pyruvic acid (Ser)). Residue Thr56 coordinates substrate. Catalysis depends on Tyr57, which acts as the Proton donor. Residue 72–74 participates in substrate binding; that stretch reads GAA.

This sequence belongs to the PanD family. In terms of assembly, heterooctamer of four alpha and four beta subunits. Pyruvate serves as cofactor. Is synthesized initially as an inactive proenzyme, which is activated by self-cleavage at a specific serine bond to produce a beta-subunit with a hydroxyl group at its C-terminus and an alpha-subunit with a pyruvoyl group at its N-terminus.

The protein resides in the cytoplasm. It catalyses the reaction L-aspartate + H(+) = beta-alanine + CO2. It participates in cofactor biosynthesis; (R)-pantothenate biosynthesis; beta-alanine from L-aspartate: step 1/1. Catalyzes the pyruvoyl-dependent decarboxylation of aspartate to produce beta-alanine. This is Aspartate 1-decarboxylase from Paramagnetospirillum magneticum (strain ATCC 700264 / AMB-1) (Magnetospirillum magneticum).